The sequence spans 199 residues: Fe/S biogenesis protein NfuA (199 aa).

The [4Fe-4S] cluster site is built by Cys-151 and Cys-154.

It belongs to the NfuA family. As to quaternary structure, homodimer. [4Fe-4S] cluster serves as cofactor.

Involved in iron-sulfur cluster biogenesis. Binds a 4Fe-4S cluster, can transfer this cluster to apoproteins, and thereby intervenes in the maturation of Fe/S proteins. Could also act as a scaffold/chaperone for damaged Fe/S proteins. This chain is Fe/S biogenesis protein NfuA, found in Xylella fastidiosa (strain M23).